The sequence spans 364 residues: Paraneoplastic antigen Ma2 (364 aa).

At Ala-2 the chain carries N-acetylalanine. Acidic residues predominate over residues 335–351 (EEEEASFENESIEEPEE). A disordered region spans residues 335 to 364 (EEEEASFENESIEEPEERDGYGRWNHEGDD). Residues 352–364 (RDGYGRWNHEGDD) show a composition bias toward basic and acidic residues.

It belongs to the PNMA family. In terms of tissue distribution, brain-specific. In some cancer patients, specifically expressed by testicular tumor cells.

The protein localises to the nucleus. It localises to the nucleolus. This Homo sapiens (Human) protein is Paraneoplastic antigen Ma2 (PNMA2).